The chain runs to 160 residues: ATP synthase subunit b (160 aa).

A helical transmembrane segment spans residues 13 to 33 (VNLAIVIGVLVWFLRGFLGGI).

This sequence belongs to the ATPase B chain family. In terms of assembly, F-type ATPases have 2 components, F(1) - the catalytic core - and F(0) - the membrane proton channel. F(1) has five subunits: alpha(3), beta(3), gamma(1), delta(1), epsilon(1). F(0) has four main subunits: a(1), b(1), b'(1) and c(10-14). The alpha and beta chains form an alternating ring which encloses part of the gamma chain. F(1) is attached to F(0) by a central stalk formed by the gamma and epsilon chains, while a peripheral stalk is formed by the delta, b and b' chains.

The protein resides in the cellular thylakoid membrane. Functionally, f(1)F(0) ATP synthase produces ATP from ADP in the presence of a proton or sodium gradient. F-type ATPases consist of two structural domains, F(1) containing the extramembraneous catalytic core and F(0) containing the membrane proton channel, linked together by a central stalk and a peripheral stalk. During catalysis, ATP synthesis in the catalytic domain of F(1) is coupled via a rotary mechanism of the central stalk subunits to proton translocation. Its function is as follows. Component of the F(0) channel, it forms part of the peripheral stalk, linking F(1) to F(0). This chain is ATP synthase subunit b, found in Parasynechococcus marenigrum (strain WH8102).